A 153-amino-acid chain; its full sequence is Histone H2B.3 (153 aa).

Composition is skewed to basic and acidic residues over residues 1–28 (MAPK…EKAP) and 36–53 (EKRL…EGRK). The tract at residues 1-61 (MAPKAEKKPA…RKAGRKKAKK (61 aa)) is disordered. Lysine 7 and lysine 37 each carry N6-acetyllysine. Lysine 149 participates in a covalent cross-link: Glycyl lysine isopeptide (Lys-Gly) (interchain with G-Cter in ubiquitin).

It belongs to the histone H2B family. As to quaternary structure, the nucleosome is a histone octamer containing two molecules each of H2A, H2B, H3 and H4 assembled in one H3-H4 heterotetramer and two H2A-H2B heterodimers. The octamer wraps approximately 147 bp of DNA. Post-translationally, can be acetylated to form H2BK6ac and H2BK33ac. Monoubiquitinated by BRE1 to form H2BK143ub1 and deubiquitinated by UBP26. Required for heterochromatic histone H3 di- and trimethylation at H3K4me. May give a specific tag for epigenetic transcriptional activation.

The protein localises to the nucleus. It is found in the chromosome. Functionally, core component of nucleosome. Nucleosomes wrap and compact DNA into chromatin, limiting DNA accessibility to the cellular machineries which require DNA as a template. Histones thereby play a central role in transcription regulation, DNA repair, DNA replication and chromosomal stability. DNA accessibility is regulated via a complex set of post-translational modifications of histones, also called histone code, and nucleosome remodeling. This Oryza sativa subsp. japonica (Rice) protein is Histone H2B.3 (H2B.3).